The sequence spans 255 residues: Hydroxyacylglutathione hydrolase (255 aa).

Zn(2+)-binding residues include His-56, His-58, Asp-60, His-61, His-112, Asp-129, and His-167.

It belongs to the metallo-beta-lactamase superfamily. Glyoxalase II family. As to quaternary structure, monomer. Zn(2+) serves as cofactor.

The catalysed reaction is an S-(2-hydroxyacyl)glutathione + H2O = a 2-hydroxy carboxylate + glutathione + H(+). It participates in secondary metabolite metabolism; methylglyoxal degradation; (R)-lactate from methylglyoxal: step 2/2. Its function is as follows. Thiolesterase that catalyzes the hydrolysis of S-D-lactoyl-glutathione to form glutathione and D-lactic acid. In Pseudomonas fluorescens (strain SBW25), this protein is Hydroxyacylglutathione hydrolase.